A 264-amino-acid polypeptide reads, in one-letter code: MQQYQALLRDILENGHKRGDRTGVGTIGVFGRQMRFDLSEGFPMVTTKRLHLRSIIVELLWFLRGDTNIAYLKENGVSIWDEWADENGDLGPVYGKQWRSWATPNGEAIDQIQWVLNEIRTNPNSRRLIVSAWNPADVNDMALPPCHCLFQFNVMDGKLNCQLYQRSADVFLGVPFNIASYALLTMMMARATGLQPGEFVHTFGDAHLYLNHLEQAELQLTREPRDLPTIHMNPDKADLFGWEYEDFRVDGYAPHPHIKAPVAV.

Arg21 contacts dUMP. His51 serves as a coordination point for (6R)-5,10-methylene-5,6,7,8-tetrahydrofolate. Position 126–127 (126–127) interacts with dUMP; sequence RR. Catalysis depends on Cys146, which acts as the Nucleophile. Residues 166 to 169, Asn177, and 207 to 209 each bind dUMP; these read RSAD and HLY. Residue Asp169 participates in (6R)-5,10-methylene-5,6,7,8-tetrahydrofolate binding. Ala263 is a binding site for (6R)-5,10-methylene-5,6,7,8-tetrahydrofolate.

Belongs to the thymidylate synthase family. Bacterial-type ThyA subfamily. As to quaternary structure, homodimer.

It is found in the cytoplasm. It catalyses the reaction dUMP + (6R)-5,10-methylene-5,6,7,8-tetrahydrofolate = 7,8-dihydrofolate + dTMP. It participates in pyrimidine metabolism; dTTP biosynthesis. Its function is as follows. Catalyzes the reductive methylation of 2'-deoxyuridine-5'-monophosphate (dUMP) to 2'-deoxythymidine-5'-monophosphate (dTMP) while utilizing 5,10-methylenetetrahydrofolate (mTHF) as the methyl donor and reductant in the reaction, yielding dihydrofolate (DHF) as a by-product. This enzymatic reaction provides an intracellular de novo source of dTMP, an essential precursor for DNA biosynthesis. This Hyphomonas neptunium (strain ATCC 15444) protein is Thymidylate synthase.